Consider the following 406-residue polypeptide: Argininosuccinate synthase (406 aa).

Residues 13–21 and Ala40 contribute to the ATP site; that span reads AYSGGLDTS. L-citrulline-binding residues include Tyr91 and Ser96. Gly121 contributes to the ATP binding site. Residues Thr123, Asn127, and Asp128 each coordinate L-aspartate. Asn127 lines the L-citrulline pocket. L-citrulline contacts are provided by Arg131, Ser182, Ser191, Glu267, and Tyr279.

Belongs to the argininosuccinate synthase family. Type 1 subfamily. In terms of assembly, homotetramer.

The protein localises to the cytoplasm. It catalyses the reaction L-citrulline + L-aspartate + ATP = 2-(N(omega)-L-arginino)succinate + AMP + diphosphate + H(+). It participates in amino-acid biosynthesis; L-arginine biosynthesis; L-arginine from L-ornithine and carbamoyl phosphate: step 2/3. In Brucella abortus (strain S19), this protein is Argininosuccinate synthase.